We begin with the raw amino-acid sequence, 523 residues long: Inosine-5'-monophosphate dehydrogenase 2 (523 aa).

2 consecutive CBS domains span residues 121 to 183 and 184 to 240; these read FINN…VQDV and MTKN…PLAS. NAD(+) is bound by residues 278–280 and 328–330; these read DSS and GMG. Positions 330 and 332 each coordinate K(+). S333 is an IMP binding site. C335 contacts K(+). C335 acts as the Thioimidate intermediate in catalysis. IMP-binding positions include 368–370, 391–392, and 415–419; these read DGG, GG, and YRGMG. Residue R437 is the Proton acceptor of the active site. Q449 provides a ligand contact to IMP. The K(+) site is built by E508, G509, and G510.

The protein belongs to the IMPDH/GMPR family. In terms of assembly, homotetramer. Seems to be able to form heterotetramers composed from more than 1 of the 3 IMPDH gene products (IMD2-4). Requires K(+) as cofactor.

It localises to the cytoplasm. The catalysed reaction is IMP + NAD(+) + H2O = XMP + NADH + H(+). Its pathway is purine metabolism; XMP biosynthesis via de novo pathway; XMP from IMP: step 1/1. With respect to regulation, mycophenolic acid (MPA) is a non-competitive inhibitor that prevents formation of the closed enzyme conformation by binding to the same site as the amobile flap. In contrast, mizoribine monophosphate (MZP) is a competitive inhibitor that induces the closed conformation. MPA is a potent inhibitor of mammalian IMPDHs but a poor inhibitor of the bacterial enzymes. MZP is a more potent inhibitor of bacterial IMPDH. Catalyzes the conversion of inosine 5'-phosphate (IMP) to xanthosine 5'-phosphate (XMP), the first committed and rate-limiting step in the de novo synthesis of guanine nucleotides, and therefore plays an important role in the regulation of cell growth. In contrast to the other IMPDH alleles IMD3 and IMD4, the enzymatic activity of IMD2 seems to be intrinsically drug resistant. The protein is Inosine-5'-monophosphate dehydrogenase 2 of Saccharomyces cerevisiae (strain ATCC 204508 / S288c) (Baker's yeast).